A 255-amino-acid polypeptide reads, in one-letter code: Ornithine decarboxylase antizyme (255 aa).

This sequence belongs to the ODC antizyme family. In terms of assembly, interacts with ODC and thereby sterically blocks ODC homodimerization.

Functionally, ornithine decarboxylase (ODC) antizyme protein that negatively regulates ODC activity and intracellular polyamine biosynthesis in response to increased intracellular polyamine levels. Binds to ODC monomers, inhibiting the assembly of the functional ODC homodimer, and targets the monomers for ubiquitin-independent proteolytic destruction by the 26S proteasome. The protein is Ornithine decarboxylase antizyme (OAZ1) of Eremothecium gossypii (strain ATCC 10895 / CBS 109.51 / FGSC 9923 / NRRL Y-1056) (Yeast).